A 235-amino-acid polypeptide reads, in one-letter code: Urease accessory protein UreF (235 aa).

This sequence belongs to the UreF family. In terms of assembly, ureD, UreF and UreG form a complex that acts as a GTP-hydrolysis-dependent molecular chaperone, activating the urease apoprotein by helping to assemble the nickel containing metallocenter of UreC. The UreE protein probably delivers the nickel.

It is found in the cytoplasm. Its function is as follows. Required for maturation of urease via the functional incorporation of the urease nickel metallocenter. The chain is Urease accessory protein UreF from Pseudoalteromonas translucida (strain TAC 125).